The chain runs to 249 residues: Isoprenyl transferase (249 aa).

The active site involves aspartate 25. Residue aspartate 25 participates in Mg(2+) binding. Substrate is bound by residues glycine 26 to arginine 29, tryptophan 30, arginine 38, histidine 42, and serine 70 to glutamate 72. Asparagine 73 serves as the catalytic Proton acceptor. Residues tryptophan 74, arginine 76, arginine 197, and arginine 203–serine 205 each bind substrate. Glutamate 216 is a Mg(2+) binding site.

The protein belongs to the UPP synthase family. Homodimer. Mg(2+) is required as a cofactor.

Catalyzes the condensation of isopentenyl diphosphate (IPP) with allylic pyrophosphates generating different type of terpenoids. The polypeptide is Isoprenyl transferase (Streptococcus pyogenes serotype M6 (strain ATCC BAA-946 / MGAS10394)).